Reading from the N-terminus, the 98-residue chain is Lipolysis-activating peptide 1-alpha chain (98 aa).

A signal peptide spans 1 to 22 (MMKLVLFGIIVILFSMIGSIHG). Residues 26 to 89 (PGNYPLNTYG…IWDAVKRHCK (64 aa)) enclose the LCN-type CS-alpha/beta domain. Disulfide bonds link cysteine 40/cysteine 63, cysteine 49/cysteine 68, and cysteine 53/cysteine 70. A Lysine amide modification is found at lysine 96.

This sequence belongs to the long (3 C-C) scorpion toxin superfamily. In terms of assembly, monomer (edited version) and heterodimer (non-edited version) of this alpha chain and a beta chain (AC B8XGZ8). In terms of tissue distribution, expressed by the venom gland.

Its subcellular location is the secreted. In terms of biological role, the heterodimer non-edited LVP1 induces lipolysis in rat adipocytes. Induction of lipolysis by LVP1 appears to be mediated through the beta-2 adrenergic receptor pathway (ADRB2). Its function is as follows. The edited BmKBTx-like, similar to beta-toxins, may modulate voltage-gated sodium channels (Nav) and may block voltage-gated potassium channels (Kv). The sequence is that of Lipolysis-activating peptide 1-alpha chain from Buthus israelis (Israeli scorpion).